The primary structure comprises 511 residues: Inositol-3-phosphate synthase (511 aa).

NAD(+) is bound by residues Gly-70, Asn-71, Asn-72, Asp-143, Ser-179, Ile-180, Gln-190, Arg-193, Ser-230, Ala-231, Asn-232, Thr-233, Gly-281, Ser-282, Asp-306, Thr-309, Asn-340, Asn-341, Asp-342, Lys-355, Gly-393, Asp-394, Asp-422, and Ser-423.

The protein belongs to the myo-inositol 1-phosphate synthase family. NAD(+) is required as a cofactor.

It is found in the cytoplasm. It carries out the reaction D-glucose 6-phosphate = 1D-myo-inositol 3-phosphate. It participates in polyol metabolism; myo-inositol biosynthesis; myo-inositol from D-glucose 6-phosphate: step 1/2. Its function is as follows. Key enzyme in myo-inositol biosynthesis pathway that catalyzes the conversion of glucose 6-phosphate to 1-myo-inositol 1-phosphate in a NAD-dependent manner. Rate-limiting enzyme in the synthesis of all inositol-containing compounds. This is Inositol-3-phosphate synthase (ino1) from Dictyostelium discoideum (Social amoeba).